Consider the following 539-residue polypeptide: Chaperonin GroEL (539 aa).

Residues 29 to 32, 86 to 90, Gly-412, 475 to 477, and Asp-491 contribute to the ATP site; these read TLGP, DGTTT, and NAA.

Belongs to the chaperonin (HSP60) family. In terms of assembly, forms a cylinder of 14 subunits composed of two heptameric rings stacked back-to-back. Interacts with the co-chaperonin GroES.

The protein localises to the cytoplasm. The catalysed reaction is ATP + H2O + a folded polypeptide = ADP + phosphate + an unfolded polypeptide.. Together with its co-chaperonin GroES, plays an essential role in assisting protein folding. The GroEL-GroES system forms a nano-cage that allows encapsulation of the non-native substrate proteins and provides a physical environment optimized to promote and accelerate protein folding. The chain is Chaperonin GroEL from Tsukamurella tyrosinosolvens.